We begin with the raw amino-acid sequence, 483 residues long: Glutamate--tRNA ligase (483 aa).

The 'HIGH' region motif lies at 11–21 (PSPTGLLHIGN). The 'KMSKS' region signature appears at 255–259 (KLSKR). Residue K258 coordinates ATP.

The protein belongs to the class-I aminoacyl-tRNA synthetase family. Glutamate--tRNA ligase type 1 subfamily. In terms of assembly, monomer.

The protein resides in the cytoplasm. It carries out the reaction tRNA(Glu) + L-glutamate + ATP = L-glutamyl-tRNA(Glu) + AMP + diphosphate. Catalyzes the attachment of glutamate to tRNA(Glu) in a two-step reaction: glutamate is first activated by ATP to form Glu-AMP and then transferred to the acceptor end of tRNA(Glu). The chain is Glutamate--tRNA ligase from Lactococcus lactis subsp. cremoris (strain MG1363).